Here is a 220-residue protein sequence, read N- to C-terminus: Large ribosomal subunit protein bL21c (220 aa).

It belongs to the bacterial ribosomal protein bL21 family. As to quaternary structure, part of the 50S ribosomal subunit.

The protein resides in the plastid. The protein localises to the chloroplast. In terms of biological role, this protein binds to 23S ribosomal RNA in the presence of protein L20. This is Large ribosomal subunit protein bL21c (RPL21) from Arabidopsis thaliana (Mouse-ear cress).